Here is a 104-residue protein sequence, read N- to C-terminus: SOSS complex subunit C (104 aa).

Ala-2 carries the N-acetylalanine modification.

Belongs to the SOSS-C family. As to quaternary structure, component of the SOSS complex, composed of SOSS-B (SOSS-B1/NABP2 or SOSS-B2/NABP1), SOSS-A/INTS3 and SOSS-C/INIP. SOSS complexes containing SOSS-B1/NABP2 are more abundant than complexes containing SOSS-B2/NABP1. Interacts with INTS3; the interaction is direct.

The protein resides in the nucleus. In terms of biological role, component of the SOSS complex, a multiprotein complex that functions downstream of the MRN complex to promote DNA repair and G2/M checkpoint. The SOSS complex associates with single-stranded DNA at DNA lesions and influences diverse endpoints in the cellular DNA damage response including cell-cycle checkpoint activation, recombinational repair and maintenance of genomic stability. Required for efficient homologous recombination-dependent repair of double-strand breaks (DSBs) and ATM-dependent signaling pathways. The protein is SOSS complex subunit C (INIP) of Bos taurus (Bovine).